A 242-amino-acid polypeptide reads, in one-letter code: 4-hydroxy-tetrahydrodipicolinate reductase (242 aa).

NAD(+) is bound by residues 79-81 (ATT) and 103-106 (SANM). H135 serves as the catalytic Proton donor/acceptor. (S)-2,3,4,5-tetrahydrodipicolinate is bound at residue H136. The active-site Proton donor is the K139. 145-146 (GT) contributes to the (S)-2,3,4,5-tetrahydrodipicolinate binding site.

Belongs to the DapB family.

The protein localises to the cytoplasm. It catalyses the reaction (S)-2,3,4,5-tetrahydrodipicolinate + NAD(+) + H2O = (2S,4S)-4-hydroxy-2,3,4,5-tetrahydrodipicolinate + NADH + H(+). The catalysed reaction is (S)-2,3,4,5-tetrahydrodipicolinate + NADP(+) + H2O = (2S,4S)-4-hydroxy-2,3,4,5-tetrahydrodipicolinate + NADPH + H(+). It functions in the pathway amino-acid biosynthesis; L-lysine biosynthesis via DAP pathway; (S)-tetrahydrodipicolinate from L-aspartate: step 4/4. Its function is as follows. Catalyzes the conversion of 4-hydroxy-tetrahydrodipicolinate (HTPA) to tetrahydrodipicolinate. In Staphylococcus carnosus (strain TM300), this protein is 4-hydroxy-tetrahydrodipicolinate reductase.